The following is a 715-amino-acid chain: Scinderin (715 aa).

The segment at 1–363 is actin-severing; that stretch reads MAQGLYHEEF…DGFGKVYVTE (363 aa). A Gelsolin-like 1 repeat occupies 27 to 77; the sequence is LELVPVPESAYGNFYVGDAYLVLHTTQASRGFTYRLHFWLGKECTQDESTA. A Phosphotyrosine modification is found at tyrosine 102. A 1,2-diacyl-sn-glycero-3-phospho-(1D-myo-inositol-4,5-bisphosphate)-binding positions include 112–119 and 138–146; these read KGGLKYKA and RLLHVKGRR. Gelsolin-like repeat units follow at residues 148-188, 265-307, 398-451, and 523-564; these read VRAT…YERL, LVAE…QERK, VQIW…DELT, and TRIM…EEEK. The interval 364–715 is actin-binding, Ca-sensitive; the sequence is KVAHVKQIPF…WFLGWDSSRW (352 aa). The ca(2+)-dependent actin binding stretch occupies residues 364–715; sequence KVAHVKQIPF…WFLGWDSSRW (352 aa). 3 residues coordinate Ca(2+): asparagine 538, aspartate 539, and glutamate 562. Tyrosine 599 is subject to Phosphotyrosine. A Gelsolin-like 6 repeat occupies 626-668; the sequence is FIIEEVPGEFTQDDLAEDDVMLLDAWEQIFIWIGKDANEVEKS. Ca(2+) contacts are provided by aspartate 643, aspartate 644, and glutamate 666.

The protein belongs to the villin/gelsolin family. The N-terminus is blocked. In terms of tissue distribution, in the adrenal gland, expressed in the medulla but, in the cortex, found only in diffuse parts.

Its subcellular location is the cytoplasm. The protein resides in the cytoskeleton. It is found in the cell projection. The protein localises to the podosome. Functionally, ca(2+)-dependent actin filament-severing protein that has a regulatory function in exocytosis by affecting the organization of the microfilament network underneath the plasma membrane. In vitro, also has barbed end capping and nucleating activities in the presence of Ca(2+). Severing activity is inhibited by phosphatidylinositol 4,5-bis-phosphate (PIP2). Required for megakaryocyte differentiation, maturation, polyploidization and apoptosis with the release of platelet-like particles. Plays a role in osteoclastogenesis (OCG) and actin cytoskeletal organization in osteoclasts. Regulates chondrocyte proliferation and differentiation. Inhibits cell proliferation and tumorigenesis. Signaling is mediated by MAPK, p38 and JNK pathways. This is Scinderin from Bos taurus (Bovine).